Reading from the N-terminus, the 620-residue chain is 1-deoxy-D-xylulose-5-phosphate synthase (620 aa).

Thiamine diphosphate-binding positions include H80 and 121 to 123 (GHS). D152 lines the Mg(2+) pocket. Residues 153-154 (GA), N181, Y288, and E370 each bind thiamine diphosphate. N181 is a Mg(2+) binding site.

This sequence belongs to the transketolase family. DXPS subfamily. Homodimer. Requires Mg(2+) as cofactor. It depends on thiamine diphosphate as a cofactor.

The enzyme catalyses D-glyceraldehyde 3-phosphate + pyruvate + H(+) = 1-deoxy-D-xylulose 5-phosphate + CO2. It functions in the pathway metabolic intermediate biosynthesis; 1-deoxy-D-xylulose 5-phosphate biosynthesis; 1-deoxy-D-xylulose 5-phosphate from D-glyceraldehyde 3-phosphate and pyruvate: step 1/1. Catalyzes the acyloin condensation reaction between C atoms 2 and 3 of pyruvate and glyceraldehyde 3-phosphate to yield 1-deoxy-D-xylulose-5-phosphate (DXP). This Escherichia coli O6:K15:H31 (strain 536 / UPEC) protein is 1-deoxy-D-xylulose-5-phosphate synthase.